A 38-amino-acid polypeptide reads, in one-letter code: U-theraphotoxin-Aju1a (38 aa).

Intrachain disulfides connect cysteine 3–cysteine 24, cysteine 7–cysteine 30, and cysteine 16–cysteine 35.

In terms of tissue distribution, expressed by the venom gland.

The protein resides in the secreted. Functionally, has strong antifungal activity against C.albicans MDM8, C.krusei IOC 4559 (MIC=2.5-5 uM), C.glabrata IOC 45658 (MIC=2.5-5 uM), C.albicans IOC 45588 (MIC=2.5-5 uM), C.parapsilosis IOC 456416 (MIC=2.5-5 uM), C.tropicalis IOC 45608 (MIC=2.5-5 uM), C.guilliermondii IOC 455716 (MIC=2.5-5 uM) and A.niger (MIC=5-10 uM). Lacks antifungal activity against B.bassiana. Has no antibacterial effect against Gram-positive bacteria M.luteus, S.epidermidis, S.aureus or against Gram-negative bacteria E.coli and P.aeruginosa. Has no hemolytic activity against human erythrocytes. Probable ion channel inhibitor. This is U-theraphotoxin-Aju1a from Avicularia juruensis (Yellow-banded pinktoe).